The sequence spans 414 residues: Putative competence-damage inducible protein (414 aa).

It belongs to the CinA family.

In Moorella thermoacetica (strain ATCC 39073 / JCM 9320), this protein is Putative competence-damage inducible protein.